The sequence spans 165 residues: Austinoid biosynthesis cluster protein J (165 aa).

This sequence belongs to the trt14 isomerase family. In terms of assembly, homodimer.

Its pathway is secondary metabolite biosynthesis; terpenoid biosynthesis. Functionally, part of the gene cluster that mediates the biosynthesis of calidodehydroaustin, a fungal meroterpenoid. The first step of the pathway is the synthesis of 3,5-dimethylorsellinic acid by the polyketide synthase ausA. 3,5-dimethylorsellinic acid is then prenylated by the polyprenyl transferase ausN. Further epoxidation by the FAD-dependent monooxygenase ausM and cyclization by the probable terpene cyclase ausL lead to the formation of protoaustinoid A. Protoaustinoid A is then oxidized to spiro-lactone preaustinoid A3 by the combined action of the FAD-binding monooxygenases ausB and ausC, and the dioxygenase ausE. Acid-catalyzed keto-rearrangement and ring contraction of the tetraketide portion of preaustinoid A3 by ausJ lead to the formation of preaustinoid A4. The aldo-keto reductase ausK, with the help of ausH, is involved in the next step by transforming preaustinoid A4 into isoaustinone which is in turn hydroxylated by the P450 monooxygenase ausI to form austinolide. The cytochrome P450 monooxygenase ausG modifies austinolide to austinol. Austinol is further acetylated to austin by the O-acetyltransferase ausP, which spontaneously changes to dehydroaustin. The cytochrome P450 monooxygenase ausR then converts dehydroaustin is into 7-dehydrodehydroaustin. The hydroxylation catalyzed by ausR permits the O-acetyltransferase ausQ to add an additional acetyl group to the molecule, leading to the formation of acetoxydehydroaustin. The short chain dehydrogenase ausT catalyzes the reduction of the double bond present between carbon atoms 1 and 2 to convert 7-dehydrodehydroaustin into 1,2-dihydro-7-hydroxydehydroaustin. AusQ catalyzes not only an acetylation reaction but also the addition of the PKS ausV diketide product to 1,2-dihydro-7-hydroxydehydroaustin, forming precalidodehydroaustin. Finally, the iron/alpha-ketoglutarate-dependent dioxygenase converts precalidodehydroaustin into calidodehydroaustin. In Aspergillus calidoustus, this protein is Austinoid biosynthesis cluster protein J.